We begin with the raw amino-acid sequence, 667 residues long: Serine/threonine-protein kinase BUR1 (667 aa).

One can recognise a Protein kinase domain in the interval 60-378 (YKEEEKLGQG…AMSAMKHPFF (319 aa)). ATP-binding positions include 66–74 (LGQGTFGEV) and K89. D207 (proton acceptor) is an active-site residue. The tract at residues 408–667 (HEAMSQKGPS…SEQKDIADLY (260 aa)) is disordered. Over residues 432-443 (KFEKKSGIKREQ) the composition is skewed to basic and acidic residues. The segment covering 494–516 (NNHSGSLRNRITPSNMGTHSNPR) has biased composition (polar residues). The segment covering 541-556 (YNRGYSSSVNSRYNNR) has biased composition (low complexity). 3 stretches are compositionally biased toward polar residues: residues 582 to 594 (DNNQSQTRLQGHS), 602 to 611 (SKYNSTQTNI), and 622 to 632 (NEYNASKLGSQ). Residues 633-667 (DTKKNDYPKHSETQKQQNNEEKKIHSEQKDIADLY) show a composition bias toward basic and acidic residues.

It belongs to the protein kinase superfamily. CMGC Ser/Thr protein kinase family. CDC2/CDKX subfamily.

It localises to the nucleus. It carries out the reaction L-seryl-[protein] + ATP = O-phospho-L-seryl-[protein] + ADP + H(+). The catalysed reaction is L-threonyl-[protein] + ATP = O-phospho-L-threonyl-[protein] + ADP + H(+). It catalyses the reaction [DNA-directed RNA polymerase] + ATP = phospho-[DNA-directed RNA polymerase] + ADP + H(+). Functionally, serine/threonine-protein kinase involved in transcription regulation. Phosphorylates the UBC2/RAD6 ubiquitin-conjugating enzyme (E2), leading to monoubiquitination of histone H2B and the silencing of telomeric-associated genes. Also required for histone H3 methylation. Necessary for the recovery from pheromone-induced growth arrest in the cell cycle G1 phase. The protein is Serine/threonine-protein kinase BUR1 (BUR1) of Candida glabrata (strain ATCC 2001 / BCRC 20586 / JCM 3761 / NBRC 0622 / NRRL Y-65 / CBS 138) (Yeast).